The chain runs to 203 residues: ATP-dependent Clp protease proteolytic subunit (203 aa).

Ser107 acts as the Nucleophile in catalysis. Residue His132 is part of the active site.

The protein belongs to the peptidase S14 family. As to quaternary structure, fourteen ClpP subunits assemble into 2 heptameric rings which stack back to back to give a disk-like structure with a central cavity, resembling the structure of eukaryotic proteasomes.

The protein resides in the cytoplasm. The catalysed reaction is Hydrolysis of proteins to small peptides in the presence of ATP and magnesium. alpha-casein is the usual test substrate. In the absence of ATP, only oligopeptides shorter than five residues are hydrolyzed (such as succinyl-Leu-Tyr-|-NHMec, and Leu-Tyr-Leu-|-Tyr-Trp, in which cleavage of the -Tyr-|-Leu- and -Tyr-|-Trp bonds also occurs).. In terms of biological role, cleaves peptides in various proteins in a process that requires ATP hydrolysis. Has a chymotrypsin-like activity. Plays a major role in the degradation of misfolded proteins. In Shewanella sediminis (strain HAW-EB3), this protein is ATP-dependent Clp protease proteolytic subunit.